The sequence spans 239 residues: Ribonuclease P protein component 3 (239 aa).

This sequence belongs to the eukaryotic/archaeal RNase P protein component 3 family. In terms of assembly, consists of a catalytic RNA component and at least 4-5 protein subunits.

Its subcellular location is the cytoplasm. The enzyme catalyses Endonucleolytic cleavage of RNA, removing 5'-extranucleotides from tRNA precursor.. In terms of biological role, part of ribonuclease P, a protein complex that generates mature tRNA molecules by cleaving their 5'-ends. This Methanosarcina barkeri (strain Fusaro / DSM 804) protein is Ribonuclease P protein component 3.